The primary structure comprises 49 residues: Glycolactin (49 aa).

Belongs to the pancreatic ribonuclease family. In terms of processing, glycosylated. Milk.

It localises to the secreted. Its function is as follows. Manifests poly C-specific RNase activity toward yeast tRNA, elicits a dose-dependent inhibition of cell-free translation, inhibits formation of superoxide ions in vitro and inhibits the hemagglutinating activities of soybean lectin and Ricinus communis agglutinin 120. Inhibits HIV-1 reverse transcriptase. The sequence is that of Glycolactin from Bos taurus (Bovine).